Reading from the N-terminus, the 97-residue chain is MKLRPLHDRVVIRRSEEETKTAGGIVLPGSAAEKPNRGEVVAVGTGRVLDNGEVRAPAVKVGDKVVFGPYSGSNTVKVDGEDLLVMSENEILAVIEA.

Belongs to the GroES chaperonin family. In terms of assembly, heptamer of 7 subunits arranged in a ring. Interacts with the chaperonin GroEL.

The protein resides in the cytoplasm. In terms of biological role, together with the chaperonin GroEL, plays an essential role in assisting protein folding. The GroEL-GroES system forms a nano-cage that allows encapsulation of the non-native substrate proteins and provides a physical environment optimized to promote and accelerate protein folding. GroES binds to the apical surface of the GroEL ring, thereby capping the opening of the GroEL channel. The sequence is that of Co-chaperonin GroES from Stutzerimonas stutzeri (strain A1501) (Pseudomonas stutzeri).